We begin with the raw amino-acid sequence, 347 residues long: Bifunctional methylenetetrahydrofolate dehydrogenase/cyclohydrolase 2, mitochondrial (347 aa).

Residues 98-102 and 145-147 contribute to the substrate site; these read YVRNK and VQL. NAD(+) contacts are provided by residues 214 to 216 and Arg247; that span reads GRS. Residue 323-327 coordinates substrate; the sequence is PGGVG.

The protein belongs to the tetrahydrofolate dehydrogenase/cyclohydrolase family. The cofactor is Mg(2+).

The protein localises to the mitochondrion inner membrane. The enzyme catalyses (6R)-5,10-methylene-5,6,7,8-tetrahydrofolate + NAD(+) = (6R)-5,10-methenyltetrahydrofolate + NADH. The catalysed reaction is (6R)-5,10-methenyltetrahydrofolate + H2O = (6R)-10-formyltetrahydrofolate + H(+). It catalyses the reaction (6R)-5,10-methylene-5,6,7,8-tetrahydrofolate + NADP(+) = (6R)-5,10-methenyltetrahydrofolate + NADPH. It participates in one-carbon metabolism; tetrahydrofolate interconversion. Bifunctional mitochondrial folate-interconverting enzyme that has both NAD/NADP-dependent methylenetetrahydrofolate dehydrogenase and methenyltetrahydrofolate cyclohydrolase activities. This is Bifunctional methylenetetrahydrofolate dehydrogenase/cyclohydrolase 2, mitochondrial from Callithrix jacchus (White-tufted-ear marmoset).